The primary structure comprises 84 residues: Small ribosomal subunit protein eS27z (84 aa).

Residues 39–61 form a C4-type zinc finger; that stretch reads CQGCFNITTVFSHSQTVVMCGNC.

This sequence belongs to the eukaryotic ribosomal protein eS27 family. (Microbial infection) May interact with Tomato yellow leaf curl virus (TYLCV) and papaya leaf curl China virus (PaLcuCNV) C2 proteins. This interaction prevents activation of Jasmonate signaling, thereby facilitating viral uptake by insects vectors. It depends on Zn(2+) as a cofactor.

The protein is Small ribosomal subunit protein eS27z (RPS27A) of Arabidopsis thaliana (Mouse-ear cress).